A 376-amino-acid chain; its full sequence is Fibromodulin (376 aa).

The first 18 residues, Met-1 to Ala-18, serve as a signal peptide directing secretion. Pyrrolidone carboxylic acid is present on Gln-19. Sulfotyrosine occurs at positions 20, 38, 45, 47, 50, 53, 55, 63, and 65. One can recognise an LRRNT domain in the interval Ser-67 to Ser-105. LRR repeat units lie at residues Arg-106 to Asn-127, Gly-130 to Phe-151, His-156 to Arg-176, Ser-177 to Gly-198, Asn-201 to Leu-222, Ser-224 to Ala-245, Leu-246 to Gly-266, and Lys-269 to Thr-289. A glycan (N-linked (GlcNAc...) (keratan sulfate) asparagine) is linked at Asn-127. The N-linked (GlcNAc...) (keratan sulfate) asparagine glycan is linked to Asn-166. Asn-201 carries an N-linked (GlcNAc...) (keratan sulfate) asparagine glycan. The N-linked (GlcNAc...) (keratan sulfate) asparagine glycan is linked to Asn-291. LRR repeat units lie at residues Ser-294 to Leu-315 and Glu-316 to Thr-335. The cysteines at positions 334 and 367 are disulfide-linked. Asn-341 is a glycosylation site (N-linked (GlcNAc...) asparagine). One copy of the LRR 11 repeat lies at Lys-344–Pro-365.

The protein belongs to the small leucine-rich proteoglycan (SLRP) family. SLRP class II subfamily. In terms of assembly, binds to type I and type II collagen. In terms of processing, binds keratan sulfate chains.

Its subcellular location is the secreted. The protein resides in the extracellular space. It is found in the extracellular matrix. Functionally, affects the rate of fibrils formation. May have a primary role in collagen fibrillogenesis. This chain is Fibromodulin (FMOD), found in Bos taurus (Bovine).